The chain runs to 90 residues: Small ribosomal subunit protein uS17 (90 aa).

It belongs to the universal ribosomal protein uS17 family. As to quaternary structure, part of the 30S ribosomal subunit.

In terms of biological role, one of the primary rRNA binding proteins, it binds specifically to the 5'-end of 16S ribosomal RNA. The sequence is that of Small ribosomal subunit protein uS17 from Burkholderia ambifaria (strain ATCC BAA-244 / DSM 16087 / CCUG 44356 / LMG 19182 / AMMD) (Burkholderia cepacia (strain AMMD)).